A 104-amino-acid polypeptide reads, in one-letter code: Large ribosomal subunit protein bL21 (104 aa).

This sequence belongs to the bacterial ribosomal protein bL21 family. As to quaternary structure, part of the 50S ribosomal subunit. Contacts protein L20.

In terms of biological role, this protein binds to 23S rRNA in the presence of protein L20. The chain is Large ribosomal subunit protein bL21 from Tropheryma whipplei (strain TW08/27) (Whipple's bacillus).